The primary structure comprises 123 residues: Small ribosomal subunit protein uS12 (123 aa).

Residues 10 to 20 (KGRKKVKKKKT) are compositionally biased toward basic residues. Residues 10–32 (KGRKKVKKKKTAPALQGSPQKRG) form a disordered region. Position 89 is a 3-methylthioaspartic acid (D89).

This sequence belongs to the universal ribosomal protein uS12 family. Part of the 30S ribosomal subunit. Contacts proteins S8 and S17. May interact with IF1 in the 30S initiation complex.

Functionally, with S4 and S5 plays an important role in translational accuracy. Interacts with and stabilizes bases of the 16S rRNA that are involved in tRNA selection in the A site and with the mRNA backbone. Located at the interface of the 30S and 50S subunits, it traverses the body of the 30S subunit contacting proteins on the other side and probably holding the rRNA structure together. The combined cluster of proteins S8, S12 and S17 appears to hold together the shoulder and platform of the 30S subunit. The sequence is that of Small ribosomal subunit protein uS12 from Halothermothrix orenii (strain H 168 / OCM 544 / DSM 9562).